Consider the following 459-residue polypeptide: ATP synthase subunit beta (459 aa).

149 to 156 (GGAGVGKT) lines the ATP pocket.

The protein belongs to the ATPase alpha/beta chains family. In terms of assembly, F-type ATPases have 2 components, CF(1) - the catalytic core - and CF(0) - the membrane proton channel. CF(1) has five subunits: alpha(3), beta(3), gamma(1), delta(1), epsilon(1). CF(0) has three main subunits: a(1), b(2) and c(9-12). The alpha and beta chains form an alternating ring which encloses part of the gamma chain. CF(1) is attached to CF(0) by a central stalk formed by the gamma and epsilon chains, while a peripheral stalk is formed by the delta and b chains.

It is found in the cell inner membrane. It carries out the reaction ATP + H2O + 4 H(+)(in) = ADP + phosphate + 5 H(+)(out). In terms of biological role, produces ATP from ADP in the presence of a proton gradient across the membrane. The catalytic sites are hosted primarily by the beta subunits. This chain is ATP synthase subunit beta, found in Pseudomonas syringae pv. syringae (strain B728a).